The following is a 219-amino-acid chain: Ribosomal RNA small subunit methyltransferase G (219 aa).

Residues G78, F83, 129-130, and R146 each bind S-adenosyl-L-methionine; that span reads GE.

This sequence belongs to the methyltransferase superfamily. RNA methyltransferase RsmG family.

The protein localises to the cytoplasm. The catalysed reaction is guanosine(527) in 16S rRNA + S-adenosyl-L-methionine = N(7)-methylguanosine(527) in 16S rRNA + S-adenosyl-L-homocysteine. Specifically methylates the N7 position of guanine in position 527 of 16S rRNA. In Geotalea uraniireducens (strain Rf4) (Geobacter uraniireducens), this protein is Ribosomal RNA small subunit methyltransferase G.